The chain runs to 505 residues: Tyrosine-protein kinase Blk (505 aa).

A disordered region spans residues Met1–Pro37. Gly2 carries the N-myristoyl glycine lipid modification. Basic and acidic residues predominate over residues Lys7–Gly21. Residues Glu58–Ser118 enclose the SH3 domain. In terms of domain architecture, SH2 spans Trp124–Cys220. Positions Leu241–Tyr494 constitute a Protein kinase domain. ATP is bound by residues Leu247–Val255 and Lys269. Asp360 acts as the Proton acceptor in catalysis. Residue Tyr389 is modified to Phosphotyrosine; by autocatalysis.

This sequence belongs to the protein kinase superfamily. Tyr protein kinase family. SRC subfamily. As to quaternary structure, interacts with CBL (via SH2 domain). Interacts with CD79A and CD79B (via SH2 domain). In terms of processing, phosphorylated on tyrosine residues after antibody-mediated surface engagement of the B-cell antigen receptor (BCR). Ubiquitination of activated BLK by the UBE3A ubiquitin protein ligase leads to its degradation by the ubiquitin-proteasome pathway. As to expression, expressed in lymphatic organs, pancreatic islets, Leydig cells, striate ducts of salivary glands and hair follicles.

It localises to the cell membrane. The catalysed reaction is L-tyrosyl-[protein] + ATP = O-phospho-L-tyrosyl-[protein] + ADP + H(+). Its activity is regulated as follows. Antibody-mediated surface engagement of the B-cell antigen receptor (BCR) which results in the phosphorylation of BLK on tyrosine residues, stimulates the enzymatic activity. In terms of biological role, non-receptor tyrosine kinase involved in B-lymphocyte development, differentiation and signaling. B-cell receptor (BCR) signaling requires a tight regulation of several protein tyrosine kinases and phosphatases, and associated coreceptors. Binding of antigen to the B-cell antigen receptor (BCR) triggers signaling that ultimately leads to B-cell activation. Signaling through BLK plays an important role in transmitting signals through surface immunoglobulins and supports the pro-B to pre-B transition, as well as the signaling for growth arrest and apoptosis downstream of B-cell receptor. Specifically binds and phosphorylates CD79A at 'Tyr-188'and 'Tyr-199', as well as CD79B at 'Tyr-196' and 'Tyr-207'. Also phosphorylates the immunoglobulin G receptors FCGR2A, FCGR2B and FCGR2C. With FYN and LYN, plays an essential role in pre-B-cell receptor (pre-BCR)-mediated NF-kappa-B activation. Also contributes to BTK activation by indirectly stimulating BTK intramolecular autophosphorylation. In pancreatic islets, acts as a modulator of beta-cells function through the up-regulation of PDX1 and NKX6-1 and consequent stimulation of insulin secretion in response to glucose. Phosphorylates CGAS, promoting retention of CGAS in the cytosol. This is Tyrosine-protein kinase Blk (BLK) from Homo sapiens (Human).